We begin with the raw amino-acid sequence, 77 residues long: Large ribosomal subunit protein uL24 (77 aa).

It belongs to the universal ribosomal protein uL24 family. As to quaternary structure, part of the 50S ribosomal subunit.

One of two assembly initiator proteins, it binds directly to the 5'-end of the 23S rRNA, where it nucleates assembly of the 50S subunit. In terms of biological role, one of the proteins that surrounds the polypeptide exit tunnel on the outside of the subunit. The chain is Large ribosomal subunit protein uL24 from Campylobacter jejuni subsp. doylei (strain ATCC BAA-1458 / RM4099 / 269.97).